The chain runs to 250 residues: UPF0014 membrane protein YjkA (250 aa).

Transmembrane regions (helical) follow at residues 3–23 (YLSLSLTMIFVLIALFLSKSF), 32–52 (IIATIRAAVQLLIIGYVLSLI), 57–77 (HPVFILLMVLLMLAVAAQNVI), 91–111 (FAALAIVEIVTQGILLSLHII), 117–137 (YVIPISGMVIGNSMVLSSLFL), and 214–234 (LLIVFTTMASAALTCVILSVL).

The protein belongs to the UPF0014 family.

The protein resides in the cell membrane. In Bacillus subtilis (strain 168), this protein is UPF0014 membrane protein YjkA (yjkA).